The primary structure comprises 79 residues: Acyl carrier protein (79 aa).

The 76-residue stretch at 2–77 (SEIADKVKKI…DAIDYIEKQK (76 aa)) folds into the Carrier domain. Ser-37 carries the O-(pantetheine 4'-phosphoryl)serine modification.

The protein belongs to the acyl carrier protein (ACP) family. 4'-phosphopantetheine is transferred from CoA to a specific serine of apo-ACP by AcpS. This modification is essential for activity because fatty acids are bound in thioester linkage to the sulfhydryl of the prosthetic group.

The protein resides in the cytoplasm. It functions in the pathway lipid metabolism; fatty acid biosynthesis. In terms of biological role, carrier of the growing fatty acid chain in fatty acid biosynthesis. This chain is Acyl carrier protein, found in Gluconacetobacter diazotrophicus (strain ATCC 49037 / DSM 5601 / CCUG 37298 / CIP 103539 / LMG 7603 / PAl5).